Here is a 501-residue protein sequence, read N- to C-terminus: Mitochondrial inner membrane i-AAA protease supercomplex subunit MGR3 (501 aa).

The Mitochondrial matrix segment spans residues 1–77; that stretch reads MLLQGMRLSQ…PKPNLKKKNR (77 aa). Positions 39–72 are disordered; that stretch reads RPPASNFNTQESAPIPESPANSPTRPQMAPKPNL. A helical membrane pass occupies residues 78 to 95; it reads SLMYSIIGVSIVGLYFWF. Residues 96–501 lie on the Mitochondrial intermembrane side of the membrane; sequence KSNSRKQKLP…LKAAKKEGLN (406 aa). TPR repeat units follow at residues 109–144, 154–187, 386–420, and 440–473; these read QKVWKEAIWQESDKMDFNYKEALRRYIEALDECDRS, TRIELKIAEMYEKLNMLEEAQNLYQELLSRFFEA, GTYIKAVRFVRKNRDLCLERAQKCYDSVIAFAKRN, and ALSTYGMGVLSLHEGVLAKAEKLFKDSITMAKET.

It belongs to the MGR3 family. As to quaternary structure, component of the mitochondrial inner membrane i-AAA protease supercomplex composed of MGR1, MGR3 and YME1. With MGR1, forms a subcomplex that binds to YME1 and to substrates to facilitate proteolysis.

It is found in the mitochondrion inner membrane. Functionally, component of the mitochondrial inner membrane i-AAA protease supercomplex, which degrades misfolded mitochondrial proteins. Together with MGR1, functions in an adapter complex that targets substrates to the i-AAA protease for degradation. Required for growth of cells lacking the mitochondrial genome. The chain is Mitochondrial inner membrane i-AAA protease supercomplex subunit MGR3 (MGR3) from Saccharomyces cerevisiae (strain ATCC 204508 / S288c) (Baker's yeast).